The sequence spans 243 residues: tRNA (guanine-N(1)-)-methyltransferase (243 aa).

Residues G110 and 130-135 (VGDYVM) each bind S-adenosyl-L-methionine.

Belongs to the RNA methyltransferase TrmD family. In terms of assembly, homodimer.

It is found in the cytoplasm. It carries out the reaction guanosine(37) in tRNA + S-adenosyl-L-methionine = N(1)-methylguanosine(37) in tRNA + S-adenosyl-L-homocysteine + H(+). Specifically methylates guanosine-37 in various tRNAs. The chain is tRNA (guanine-N(1)-)-methyltransferase from Treponema denticola (strain ATCC 35405 / DSM 14222 / CIP 103919 / JCM 8153 / KCTC 15104).